A 211-amino-acid polypeptide reads, in one-letter code: Large ribosomal subunit protein uL3 (211 aa).

A disordered region spans residues 126–147 (HGQSRGPMAHGSRYHRRPGSMG).

This sequence belongs to the universal ribosomal protein uL3 family. As to quaternary structure, part of the 50S ribosomal subunit. Forms a cluster with proteins L14 and L19.

In terms of biological role, one of the primary rRNA binding proteins, it binds directly near the 3'-end of the 23S rRNA, where it nucleates assembly of the 50S subunit. The protein is Large ribosomal subunit protein uL3 of Geobacillus thermodenitrificans (strain NG80-2).